The following is a 147-amino-acid chain: Transcription antitermination protein NusB (147 aa).

The protein belongs to the NusB family.

Functionally, involved in transcription antitermination. Required for transcription of ribosomal RNA (rRNA) genes. Binds specifically to the boxA antiterminator sequence of the ribosomal RNA (rrn) operons. This is Transcription antitermination protein NusB from Teredinibacter turnerae (strain ATCC 39867 / T7901).